Consider the following 128-residue polypeptide: Glycine cleavage system H protein (128 aa).

The region spanning 25–107 (TITVGITHHA…YGAGWFFKLK (83 aa)) is the Lipoyl-binding domain. At Lys66 the chain carries N6-lipoyllysine.

This sequence belongs to the GcvH family. As to quaternary structure, the glycine cleavage system is composed of four proteins: P, T, L and H. (R)-lipoate is required as a cofactor.

The glycine cleavage system catalyzes the degradation of glycine. The H protein shuttles the methylamine group of glycine from the P protein to the T protein. This is Glycine cleavage system H protein from Neisseria meningitidis serogroup B (strain ATCC BAA-335 / MC58).